We begin with the raw amino-acid sequence, 833 residues long: MSTGQEEHLDSKLENQISEEENQSQNQNFPTAIEDSIQASIEKLDEVDDEINPIEVKDEFPTTIGTTYDILHPREPFPKRIKLEETETEPDSNGIADNDQTMVVVPPKKPQLFYTPLKTGLVYDVRMRYHAKVFTSYSEYIDPHPEDPRRIYRIYKKLVEAGIVLDPSLAGINEIGPFMLKIPIREATSEEILQVHSEDHLKFIQSTEDMSRDQLLKETETGDSIYVNNDSYLSAKLSCGGTIEACKAVIEGRVKNSLAIVRPPGHHAEPNTPAGFCLFSNVAVAAKNMLKNYPESVRRIVIVDWDIHHGNGTQKAFYNDPRVLYISLHRFENGKFYPGTKYGDLNQVGEGPGEGFTINIPWRSSGMHDGDYVYAFNKIIQPVISEFDPDLIIVSSGFDAADGDVIGACHVTPAGYGYMTHTLKGIARGKLAVILEGGYNLDSISKSALAVAKVLVGEPPENTITLRPQAEAIEVVDEVIKIQSKYFKSLRNGIPNGIFEDVYDLADVEKSNYKLVNIADPIRSHQVEKLFNEKEFINIPIISSPSNGEKPPFTTDLPDQLEDLIVASPDIYNCTTIILTIHDPPEIWANINPTNGVIETNSTMVLEHPLVQIMDKIQKEKDPENQEKFGYLDINIPSFQLPIPGTTSESSTYNPIIFAQEVLLYIWDNYIAYFQQLKNLVMVGFGDSYQSIVNLYGKRPSNEIKDLIKGTVAFLNRTTLKPLIPVMDESMVDWYYQNSIIFTSNFNTCWTGGSGAGNGNGNGNGNNGNSSNGGGNKSADSNGHDDFSKRPRKKFGRVIKAKTDGLCDVIQEKFDEGVDFILDSIEDYSSSED.

Basic and acidic residues predominate over residues 1–13 (MSTGQEEHLDSKL). Disordered regions lie at residues 1–40 (MSTG…IQAS) and 760–791 (NGNG…SKRP). Positions 5–52 (QEEHLDSKLENQISEEENQSQNQNFPTAIEDSIQASIEKLDEVDDEIN) form a coiled coil. The span at 760-776 (NGNGNGNNGNSSNGGGN) shows a compositional bias: gly residues.

Belongs to the histone deacetylase family. HD type 2 subfamily. Interacts with BRG1.

It is found in the nucleus. The enzyme catalyses N(6)-acetyl-L-lysyl-[histone] + H2O = L-lysyl-[histone] + acetate. Its function is as follows. Responsible for the deacetylation of lysine residues on the N-terminal part of the core histones (H2A, H2B, H3 and H4). Histone deacetylation gives a tag for epigenetic repression and plays an important role in transcriptional regulation, cell cycle progression and developmental events. Histone deacetylases act via the formation of large multiprotein complexes. Deacetylates the YNG2 subunit of NuA4 histone acetyltransferase (HAT) module, leading to the reduction of YNG2 and NuA4 HAT at the promoters of hypha-specific genes. Plays a key role in the regulation of filamentous growth and virulence. Involved in the switch between two heritable states, the white and opaque states. These two cell types differ in many characteristics, including cell structure, mating competence, and virulence. Each state is heritable for many generations, and switching between states occurs stochastically at low frequency. In Candida albicans (strain SC5314 / ATCC MYA-2876) (Yeast), this protein is Histone deacetylase HDA1 (HDA1).